Consider the following 82-residue polypeptide: Cytochrome b559 subunit alpha (82 aa).

The helical transmembrane segment at 22-36 (IIHAVALPAIFVAGF) threads the bilayer. Residue His24 participates in heme binding.

Belongs to the PsbE/PsbF family. In terms of assembly, heterodimer of an alpha subunit and a beta subunit. PSII is composed of 1 copy each of membrane proteins PsbA, PsbB, PsbC, PsbD, PsbE, PsbF, PsbH, PsbI, PsbJ, PsbK, PsbL, PsbM, PsbT, PsbX, PsbY, Psb30/Ycf12, peripheral proteins PsbO, CyanoQ (PsbQ), PsbU, PsbV and a large number of cofactors. It forms dimeric complexes. Requires heme b as cofactor.

Its subcellular location is the cellular thylakoid membrane. In terms of biological role, this b-type cytochrome is tightly associated with the reaction center of photosystem II (PSII). PSII is a light-driven water:plastoquinone oxidoreductase that uses light energy to abstract electrons from H(2)O, generating O(2) and a proton gradient subsequently used for ATP formation. It consists of a core antenna complex that captures photons, and an electron transfer chain that converts photonic excitation into a charge separation. The chain is Cytochrome b559 subunit alpha from Prochlorococcus marinus (strain NATL1A).